A 179-amino-acid polypeptide reads, in one-letter code: MRIEVWQGDITELDVDVIVNAANESLLGGGGVDGAIHRAAGPRLLEACEALPQVRPGVRCPTGEIRITDGFDLKARHIFHTVGPVWRDGRHNEPEQLANCYWQSLKLAEQMMLHSIAFPAISCGIYGYPLHQAARIAVTETRDWQRSHKVPKHIVLVAYNEATYKAYQQALATQETAAA.

In terms of domain architecture, Macro spans 1-175 (MRIEVWQGDI…AYQQALATQE (175 aa)).

Belongs to the MacroD-type family.

The protein is Macro domain-containing protein XAC3343 of Xanthomonas axonopodis pv. citri (strain 306).